The following is a 312-amino-acid chain: Malate dehydrogenase (312 aa).

NAD(+) contacts are provided by residues 12–17 (GAGFTG) and aspartate 36. Arginine 87 and arginine 93 together coordinate substrate. Residues asparagine 100 and 123–125 (LTN) contribute to the NAD(+) site. Asparagine 125 is a substrate binding site. Phosphoserine is present on serine 149. Substrate is bound at residue arginine 156. Residue histidine 180 is the Proton acceptor of the active site.

This sequence belongs to the LDH/MDH superfamily. MDH type 3 family.

The catalysed reaction is (S)-malate + NAD(+) = oxaloacetate + NADH + H(+). In terms of biological role, catalyzes the reversible oxidation of malate to oxaloacetate. In Bacillus cereus (strain ATCC 14579 / DSM 31 / CCUG 7414 / JCM 2152 / NBRC 15305 / NCIMB 9373 / NCTC 2599 / NRRL B-3711), this protein is Malate dehydrogenase.